The following is an 888-amino-acid chain: Alanine--tRNA ligase (888 aa).

Zn(2+) is bound by residues histidine 571, histidine 575, cysteine 674, and histidine 678.

Belongs to the class-II aminoacyl-tRNA synthetase family. Requires Zn(2+) as cofactor.

It is found in the cytoplasm. The enzyme catalyses tRNA(Ala) + L-alanine + ATP = L-alanyl-tRNA(Ala) + AMP + diphosphate. In terms of biological role, catalyzes the attachment of alanine to tRNA(Ala) in a two-step reaction: alanine is first activated by ATP to form Ala-AMP and then transferred to the acceptor end of tRNA(Ala). Also edits incorrectly charged Ser-tRNA(Ala) and Gly-tRNA(Ala) via its editing domain. The chain is Alanine--tRNA ligase from Nocardia farcinica (strain IFM 10152).